Reading from the N-terminus, the 125-residue chain is MAISKEEVLEYIGSLSVLELSELVKMFEEKFGVSATPTVVAGAAVAGGAVAESEEKTDFNVILADSGAEKIKVIKVVREITGLGLKEAKDATEKTPHVLKEGVNKEEAETIKKKLEEVGAKVEIK.

Belongs to the bacterial ribosomal protein bL12 family. In terms of assembly, homodimer. Part of the ribosomal stalk of the 50S ribosomal subunit. Forms a multimeric L10(L12)X complex, where L10 forms an elongated spine to which 2 to 4 L12 dimers bind in a sequential fashion. Binds GTP-bound translation factors.

Forms part of the ribosomal stalk which helps the ribosome interact with GTP-bound translation factors. Is thus essential for accurate translation. The sequence is that of Large ribosomal subunit protein bL12 from Helicobacter acinonychis (strain Sheeba).